A 161-amino-acid chain; its full sequence is Nucleotide-binding protein Shew_2893 (161 aa).

Belongs to the YajQ family.

In terms of biological role, nucleotide-binding protein. This is Nucleotide-binding protein Shew_2893 from Shewanella loihica (strain ATCC BAA-1088 / PV-4).